Consider the following 990-residue polypeptide: Serine/threonine-protein phosphatase 6 regulatory ankyrin repeat subunit B (990 aa).

28 ANK repeats span residues 7-36, 40-69, 73-102, 106-135, 139-168, 172-201, 205-234, 238-267, 271-301, 305-334, 338-367, 371-400, 404-433, 437-466, 470-499, 531-560, 566-595, 599-628, 633-662, 666-695, 699-728, 732-761, 768-797, 800-829, 835-864, 868-898, 902-931, and 938-967; these read ADQP…DVNA, EKRT…RVNA, MWLT…DVNA, NWQT…SVNV, GGRT…NINA, KDRR…EVTC, KGYT…EIDE, YGNT…NVNQ, NGFT…DVNI, DGKS…EIDC, DGNT…DTAK, HNMF…EIDT, FGRT…DFNK, RGRT…NINE, WGRT…NAEE, EGYN…NMFE, ATKS…DLDI, KGRT…SVTV, TKRT…NPDV, KGQT…SVDA, LGCT…SILC, RGRT…SEED, QGYT…FRKF, NSFS…ASIV, KGRT…QVNA, AGKT…DLTL, DSNT…EQSL, and SLQT…CVLA.

Protein phosphatase 6 (PP6) holoenzyme is proposed to be a heterotrimeric complex formed by the catalytic subunit, a SAPS domain-containing subunit (PP6R) and an ankyrin repeat-domain containing regulatory subunit (ARS).

In terms of biological role, putative regulatory subunit of protein phosphatase 6 (PP6) that may be involved in the recognition of phosphoprotein substrates. The sequence is that of Serine/threonine-protein phosphatase 6 regulatory ankyrin repeat subunit B (ANKRD44) from Gallus gallus (Chicken).